The primary structure comprises 115 residues: MKKKHRIKKNDEFQTVFQKGKSNANRQFVVYQLDKEEQPNFRIGLSVSKKIGNAVVRNRIKRMIRQSITELKDEIDSGKDFVIIARKPCAEMTYEELKKSLIHVFKRSGMKRIKK.

It belongs to the RnpA family. As to quaternary structure, consists of a catalytic RNA component (M1 or rnpB) and a protein subunit.

It carries out the reaction Endonucleolytic cleavage of RNA, removing 5'-extranucleotides from tRNA precursor.. In terms of biological role, RNaseP catalyzes the removal of the 5'-leader sequence from pre-tRNA to produce the mature 5'-terminus. It can also cleave other RNA substrates such as 4.5S RNA. The protein component plays an auxiliary but essential role in vivo by binding to the 5'-leader sequence and broadening the substrate specificity of the ribozyme. The polypeptide is Ribonuclease P protein component (Bacillus cereus (strain ATCC 10987 / NRS 248)).